Here is a 353-residue protein sequence, read N- to C-terminus: WAT1-related protein At3g28100 (353 aa).

10 helical membrane-spanning segments follow: residues Ala12–Phe32, Tyr43–Phe63, Ile81–Tyr101, Thr105–Phe125, Ser137–Tyr157, Trp187–Leu207, Phe219–Val239, Phe252–Ile272, Leu283–Phe303, and Leu308–Trp328. Positions Gly27–Val155 constitute an EamA domain.

The protein belongs to the drug/metabolite transporter (DMT) superfamily. Plant drug/metabolite exporter (P-DME) (TC 2.A.7.4) family.

It localises to the membrane. The chain is WAT1-related protein At3g28100 from Arabidopsis thaliana (Mouse-ear cress).